Here is a 988-residue protein sequence, read N- to C-terminus: DExH-box ATP-dependent RNA helicase DExH9 (988 aa).

Residues 1–27 (MGSVKRKSVEESSDSAPPQKVQREDDS) are disordered. The 157-residue stretch at 76–232 (IKCLDNGESV…WVAKVHQQPC (157 aa)) folds into the Helicase ATP-binding domain. An ATP-binding site is contributed by 89-96 (AHTSAGKT). A DEVH box motif is present at residues 180 to 183 (DEVH). Residues 307 to 509 (DIFKLVKMII…SYNMLLNQLR (203 aa)) enclose the Helicase C-terminal domain.

Belongs to the DExH box helicase family. SKI2 subfamily. Ubiquitous but preferentially expressed in active tissues.

It localises to the nucleus. It is found in the nucleolus. The enzyme catalyses ATP + H2O = ADP + phosphate + H(+). ATP-dependent RNA helicase that associates with the RNA exosome complex. Required for proper rRNA biogenesis and development. Involved in the 3'-processing of the 7S pre-RNA to the mature 5.8S rRNA and also in the removal of rRNA maturation by-products. In Arabidopsis thaliana (Mouse-ear cress), this protein is DExH-box ATP-dependent RNA helicase DExH9.